The chain runs to 274 residues: Large ribosomal subunit protein uL2cz/uL2cy (274 aa).

2 disordered regions span residues 1–23 and 223–274; these read MAIH…SQVK and MNPV…RRSK. The span at 7-23 shows a compositional bias: polar residues; it reads KTSTPSTRNGTVGSQVK.

This sequence belongs to the universal ribosomal protein uL2 family. In terms of assembly, part of the 50S ribosomal subunit.

The protein resides in the plastid. The protein localises to the chloroplast. The sequence is that of Large ribosomal subunit protein uL2cz/uL2cy (rpl2-A) from Nandina domestica (Heavenly bamboo).